The primary structure comprises 101 residues: uncharacterized protein (101 aa).

Residues 72-94 form a helical membrane-spanning segment; that stretch reads ILCPSFLNYSFINIYCFGPYTMV.

It localises to the membrane. This is an uncharacterized protein from Schizosaccharomyces pombe (strain 972 / ATCC 24843) (Fission yeast).